The following is a 156-amino-acid chain: Ribosomal RNA large subunit methyltransferase H (156 aa).

Residues Leu73, Gly104, and 123–128 (LSAMTL) contribute to the S-adenosyl-L-methionine site.

It belongs to the RNA methyltransferase RlmH family. Homodimer.

It localises to the cytoplasm. The catalysed reaction is pseudouridine(1915) in 23S rRNA + S-adenosyl-L-methionine = N(3)-methylpseudouridine(1915) in 23S rRNA + S-adenosyl-L-homocysteine + H(+). Functionally, specifically methylates the pseudouridine at position 1915 (m3Psi1915) in 23S rRNA. This chain is Ribosomal RNA large subunit methyltransferase H, found in Laribacter hongkongensis (strain HLHK9).